A 282-amino-acid polypeptide reads, in one-letter code: Aquaporin NIP1-1 (282 aa).

2 helical membrane passes run 46–66 (IIAE…AVTI) and 74–94 (ITFP…VYAV). The NPA 1 signature appears at 103-105 (NPA). Transmembrane regions (helical) follow at residues 125–145 (VLAQ…MFGG), 162–182 (SLVI…GVAT), and 186–206 (AIGE…VLIA). An NPA 2 motif is present at residues 215–217 (NPA). A helical membrane pass occupies residues 232–252 (IWVYVVGPVVGAVAGAWAYNL).

The protein belongs to the MIP/aquaporin (TC 1.A.8) family. NIP (TC 1.A.8.12) subfamily.

It is found in the membrane. Functionally, aquaporins facilitate the transport of water and small neutral solutes across cell membranes. The sequence is that of Aquaporin NIP1-1 (NIP1-1) from Zea mays (Maize).